Here is a 171-residue protein sequence, read N- to C-terminus: Shikimate kinase (171 aa).

14 to 19 (GAGKST) provides a ligand contact to ATP. Mg(2+) is bound at residue Ser-18. Residues Asp-36, Arg-60, and Gly-82 each coordinate substrate. Position 120 (Arg-120) interacts with ATP. A substrate-binding site is contributed by Arg-139. Gln-156 is a binding site for ATP.

The protein belongs to the shikimate kinase family. Monomer. Requires Mg(2+) as cofactor.

The protein resides in the cytoplasm. The enzyme catalyses shikimate + ATP = 3-phosphoshikimate + ADP + H(+). Its pathway is metabolic intermediate biosynthesis; chorismate biosynthesis; chorismate from D-erythrose 4-phosphate and phosphoenolpyruvate: step 5/7. Functionally, catalyzes the specific phosphorylation of the 3-hydroxyl group of shikimic acid using ATP as a cosubstrate. The protein is Shikimate kinase of Shewanella sp. (strain MR-4).